We begin with the raw amino-acid sequence, 219 residues long: MOB kinase activator-like 1 (219 aa).

Zn(2+)-binding residues include Cys-79, Cys-84, His-161, and His-166.

This sequence belongs to the MOB1/phocein family. In terms of assembly, interacts with and activates trc and wts. Phosphorylated by wts/mats kinase complex. Activated by phosphorylation by Hippo (Hpo) kinase which increases its affinity and its ability to activate Warts (Wts) kinase. In terms of tissue distribution, ubiquitously expressed at low levels in developing tissues (at protein level).

It is found in the cytoplasm. The protein resides in the cytoskeleton. Its subcellular location is the microtubule organizing center. It localises to the centrosome. The protein localises to the nucleus. It is found in the cytosol. The protein resides in the cell membrane. In terms of biological role, coactivator of Warts (Wts) kinase in the Hippo/SWH (Sav/Wts/Hpo)signaling pathway, a signaling pathway that plays a pivotal role in organ size control and tumor suppression by restricting proliferation and promoting apoptosis. The core of this pathway is composed of a kinase cascade wherein Hippo (Hpo), in complex with its regulatory protein Salvador (Sav), phosphorylates and activates Warts (Wts) in complex with its regulatory protein Mats, which in turn phosphorylates and inactivates the Yorkie (Yki)oncoprotein. The Hippo/SWH signaling pathway inhibits the activity of the transcriptional complex formed by Scalloped (sd) and Yki and the target genes of this pathway include cyclin-E (cycE), diap1 and bantam. Mats is essential for early development and is required for proper chromosomal segregation in developing embryos. In Drosophila melanogaster (Fruit fly), this protein is MOB kinase activator-like 1.